The chain runs to 283 residues: 4-diphosphocytidyl-2-C-methyl-D-erythritol kinase (283 aa).

Residue lysine 10 is part of the active site. 99–109 (PMGGGLGGGSS) lines the ATP pocket. Aspartate 141 is an active-site residue.

It belongs to the GHMP kinase family. IspE subfamily. As to quaternary structure, homodimer.

The enzyme catalyses 4-CDP-2-C-methyl-D-erythritol + ATP = 4-CDP-2-C-methyl-D-erythritol 2-phosphate + ADP + H(+). Its pathway is isoprenoid biosynthesis; isopentenyl diphosphate biosynthesis via DXP pathway; isopentenyl diphosphate from 1-deoxy-D-xylulose 5-phosphate: step 3/6. Catalyzes the phosphorylation of the position 2 hydroxy group of 4-diphosphocytidyl-2C-methyl-D-erythritol. This is 4-diphosphocytidyl-2-C-methyl-D-erythritol kinase from Salmonella enteritidis PT4 (strain P125109).